We begin with the raw amino-acid sequence, 309 residues long: Elongation factor Ts, mitochondrial (309 aa).

The protein belongs to the EF-Ts family.

Its subcellular location is the mitochondrion. Its function is as follows. Associates with the EF-Tu.GDP complex and induces the exchange of GDP to GTP. It remains bound to the aminoacyl-tRNA.EF-Tu.GTP complex up to the GTP hydrolysis stage on the ribosome. In Salmo salar (Atlantic salmon), this protein is Elongation factor Ts, mitochondrial (tsfm).